A 455-amino-acid chain; its full sequence is Kynurenine 3-monooxygenase (455 aa).

Belongs to the aromatic-ring hydroxylase family. KMO subfamily. The cofactor is FAD.

It carries out the reaction L-kynurenine + NADPH + O2 + H(+) = 3-hydroxy-L-kynurenine + NADP(+) + H2O. It functions in the pathway cofactor biosynthesis; NAD(+) biosynthesis; quinolinate from L-kynurenine: step 1/3. Catalyzes the hydroxylation of L-kynurenine (L-Kyn) to form 3-hydroxy-L-kynurenine (L-3OHKyn). Required for synthesis of quinolinic acid. In Xanthomonas axonopodis pv. citri (strain 306), this protein is Kynurenine 3-monooxygenase.